We begin with the raw amino-acid sequence, 325 residues long: DNA-directed RNA polymerase subunit alpha (325 aa).

Positions Met-1–Asn-239 are alpha N-terminal domain (alpha-NTD). Positions Glu-255–Asn-325 are alpha C-terminal domain (alpha-CTD).

It belongs to the RNA polymerase alpha chain family. As to quaternary structure, homodimer. The RNAP catalytic core consists of 2 alpha, 1 beta, 1 beta' and 1 omega subunit. When a sigma factor is associated with the core the holoenzyme is formed, which can initiate transcription.

The catalysed reaction is RNA(n) + a ribonucleoside 5'-triphosphate = RNA(n+1) + diphosphate. Functionally, DNA-dependent RNA polymerase catalyzes the transcription of DNA into RNA using the four ribonucleoside triphosphates as substrates. The chain is DNA-directed RNA polymerase subunit alpha from Mycoplasmoides gallisepticum (strain R(low / passage 15 / clone 2)) (Mycoplasma gallisepticum).